We begin with the raw amino-acid sequence, 583 residues long: Pre-mRNA-processing protein PRP40 (583 aa).

WW domains lie at 1 to 31 and 42 to 72; these read MSIWKEAKDASGRIYYYNTLTKKSTWEKPKE and ENGWKAAKTADGKVYYYNPTTRETSWTIPAF. FF domains follow at residues 132 to 188, 201 to 257, 262 to 332, 354 to 413, 427 to 488, and 491 to 552; these read KEEA…YLSN, TSKF…YIDT, QKES…YLKI, RDRI…FVDE, QTLI…KLQN, and RILE…FKPE. Thr576 bears the Phosphothreonine mark.

This sequence belongs to the PRPF40 family. In terms of assembly, interacts with CRM1, MSL5, PRP8, and the RNA polymerase II largest subunit (RPB1). MSL5, MUD2 and PRP40 interact to form the commitment complex 2 (CC2), a precursor of mature spliceosomes.

The protein localises to the nucleus. Required for pre-spliceosome formation, which is the first step of pre-mRNA splicing. This protein is associated with snRNP U1. Two commitment complexes, CC1 and CC2, have been defined in yeast. CC1 is a basal complex dependent only on the 5' splice site. CC2 is a complex of lower mobility and is dependent on a branchpoint as well as a 5' splice site region. This protein is involved in CC2 formation where it binds to the branchpoint binding protein MSL5, bridging the U1 snRNP-associated 5' splice site and the MSL5-associated branch point 3' intron splice site. The protein is Pre-mRNA-processing protein PRP40 (PRP40) of Saccharomyces cerevisiae (strain ATCC 204508 / S288c) (Baker's yeast).